Here is a 145-residue protein sequence, read N- to C-terminus: Plastocyanin, chloroplastic (145 aa).

The N-terminal 48 residues, 1–48 (MASLMRKAAVAPAKATRTTVKASASLQRVAQAAGVAVAGFSLALSANA), are a transit peptide targeting the chloroplast. A Plastocyanin-like domain is found at 49–145 (ANVKLGADSG…AGMVGKVIVQ (97 aa)). Cu cation-binding residues include His85, Cys130, His133, and Met138.

The protein belongs to the plastocyanin family. Cu(2+) serves as cofactor.

It localises to the plastid. The protein localises to the chloroplast thylakoid membrane. Its function is as follows. Participates in electron transfer between P700 and the cytochrome b6-f complex in photosystem I. The sequence is that of Plastocyanin, chloroplastic (PETE) from Tetradesmus obliquus (Green alga).